The following is a 158-amino-acid chain: Protein Smg homolog (158 aa).

This sequence belongs to the Smg family.

In Thioalkalivibrio sulfidiphilus (strain HL-EbGR7), this protein is Protein Smg homolog.